The following is a 253-amino-acid chain: Tetraspanin-3 (253 aa).

The Cytoplasmic segment spans residues 1–11 (MGQCGITSSKT). A helical transmembrane segment spans residues 12-32 (VLVFLNLIFWGAAGILCYVGA). Over 33-50 (YVFITYDDYDHFFEDVYT) the chain is Extracellular. Residues 51–71 (LIPAVVIIAVGALLFIIGLIG) form a helical membrane-spanning segment. Residues 72–85 (CCATIRESRCGLAT) are Cytoplasmic-facing. The chain crosses the membrane as a helical span at residues 86-106 (FVIILLLVFVTEVVVVVLGYV). Topologically, residues 107–212 (YRAKVENEVD…KKLQEIMMHV (106 aa)) are extracellular. Asn127, Asn152, Asn167, and Asn183 each carry an N-linked (GlcNAc...) asparagine glycan. A helical transmembrane segment spans residues 213-233 (IWAALAFAAIQLLGMLCACIV). Topologically, residues 234–253 (LCRRSRDPAYELLITGGTYA) are cytoplasmic.

The protein belongs to the tetraspanin (TM4SF) family. Interacts with claudin-11/CLDN11 and integrins.

Its subcellular location is the membrane. In terms of biological role, regulates the proliferation and migration of oligodendrocytes, a process essential for normal myelination and repair. This Homo sapiens (Human) protein is Tetraspanin-3 (TSPAN3).